Consider the following 1399-residue polypeptide: DNA-directed RNA polymerase subunit beta' (1399 aa).

Residues Cys70, Cys72, Cys85, and Cys88 each coordinate Zn(2+). Mg(2+) is bound by residues Asp460, Asp462, and Asp464. Positions 814, 888, 895, and 898 each coordinate Zn(2+).

Belongs to the RNA polymerase beta' chain family. The RNAP catalytic core consists of 2 alpha, 1 beta, 1 beta' and 1 omega subunit. When a sigma factor is associated with the core the holoenzyme is formed, which can initiate transcription. Mg(2+) is required as a cofactor. It depends on Zn(2+) as a cofactor.

It carries out the reaction RNA(n) + a ribonucleoside 5'-triphosphate = RNA(n+1) + diphosphate. Functionally, DNA-dependent RNA polymerase catalyzes the transcription of DNA into RNA using the four ribonucleoside triphosphates as substrates. The sequence is that of DNA-directed RNA polymerase subunit beta' from Ectopseudomonas mendocina (strain ymp) (Pseudomonas mendocina).